The primary structure comprises 202 residues: Translation initiation factor IF-3 (202 aa).

The segment at 172-202 (KTRASARHPEVPGAGSVQDIDATGDTDGSPH) is disordered.

The protein belongs to the IF-3 family. As to quaternary structure, monomer.

The protein localises to the cytoplasm. IF-3 binds to the 30S ribosomal subunit and shifts the equilibrium between 70S ribosomes and their 50S and 30S subunits in favor of the free subunits, thus enhancing the availability of 30S subunits on which protein synthesis initiation begins. The protein is Translation initiation factor IF-3 of Mycobacterium leprae (strain TN).